Consider the following 419-residue polypeptide: UDP-N-acetylglucosamine 1-carboxyvinyltransferase 2 (419 aa).

Phosphoenolpyruvate is bound at residue 22–23; sequence KN. Arginine 92 contributes to the UDP-N-acetyl-alpha-D-glucosamine binding site. Cysteine 116 (proton donor) is an active-site residue. Cysteine 116 is modified (2-(S-cysteinyl)pyruvic acid O-phosphothioketal). Residues 121–125, aspartate 306, and isoleucine 328 each bind UDP-N-acetyl-alpha-D-glucosamine; that span reads RPIDL.

It belongs to the EPSP synthase family. MurA subfamily.

The protein resides in the cytoplasm. The enzyme catalyses phosphoenolpyruvate + UDP-N-acetyl-alpha-D-glucosamine = UDP-N-acetyl-3-O-(1-carboxyvinyl)-alpha-D-glucosamine + phosphate. It participates in cell wall biogenesis; peptidoglycan biosynthesis. Cell wall formation. Adds enolpyruvyl to UDP-N-acetylglucosamine. This chain is UDP-N-acetylglucosamine 1-carboxyvinyltransferase 2, found in Streptococcus mutans serotype c (strain ATCC 700610 / UA159).